The chain runs to 638 residues: Chaperone protein DnaK (638 aa).

Threonine 199 carries the phosphothreonine; by autocatalysis modification. Low complexity predominate over residues 603 to 618; the sequence is YAQPGAEAGAEQQGSA. Residues 603–638 are disordered; it reads YAQPGAEAGAEQQGSANNADDDIVDAEFEEVNDDKK. Over residues 621 to 638 the composition is skewed to acidic residues; it reads ADDDIVDAEFEEVNDDKK.

It belongs to the heat shock protein 70 family.

Its function is as follows. Acts as a chaperone. This Hydrogenovibrio crunogenus (strain DSM 25203 / XCL-2) (Thiomicrospira crunogena) protein is Chaperone protein DnaK.